We begin with the raw amino-acid sequence, 170 residues long: VIP peptides (170 aa).

Positions 1-20 are cleaved as a signal peptide; the sequence is MDTRNKAQLLVLLTLLSVLF. A propeptide spanning residues 21–79 is cleaved from the precursor; that stretch reads SQTSAWPLYRAPSALRLGDRIPFEGANEPDQVSLKEDIDMLQNALAENDTPYYDVSRNA. Ser-76 bears the Phosphoserine mark. Met-107 carries the methionine amide modification. Residue Asn-152 is modified to Asparagine amide. Residues 156–170 constitute a propeptide that is removed on maturation; it reads SSEGESPDFPEELEK.

This sequence belongs to the glucagon family.

The protein resides in the secreted. In terms of biological role, VIP is a neuropeptide involved in a diverse array of physiological processes through activating the PACAP subfamily of class B1 G protein-coupled receptors: VIP receptor 1 (VPR1) and VIP receptor 2 (VPR2). Abundantly expressed throughout the CNS and peripheral nervous systems where they primarily exert neuroprotective and immune modulatory roles. Also causes vasodilation, lowers arterial blood pressure, stimulates myocardial contractility, increases glycogenolysis and relaxes the smooth muscle of trachea, stomach and gall bladder. Its function is as follows. PHM-27 and PHV-42 are two bioactive forms from proteolysis of the same precursor protein, that cause vasodilation. PHM-27 is a potent agonist of the calcitonin receptor CALCR, with similar efficacy as calcitonin. The polypeptide is VIP peptides (Homo sapiens (Human)).